A 97-amino-acid polypeptide reads, in one-letter code: Alpha-latrotoxin associated low molecular weight protein 2 (97 aa).

An N-terminal signal peptide occupies residues 1 to 19 (MFKLICIVFIATILSITSA). Cystine bridges form between Cys36-Cys72, Cys52-Cys68, and Cys55-Cys81.

The protein belongs to the arthropod CHH/MIH/GIH/VIH hormone family. In terms of tissue distribution, expressed by the venom gland.

The protein resides in the secreted. Its function is as follows. May increase the toxicity of alpha-latrotoxin and/or other venom components. Is non-toxic to mice and to the cockroach Periplaneta americana. This is Alpha-latrotoxin associated low molecular weight protein 2 from Steatoda grossa (False black widow).